The sequence spans 208 residues: Ribonuclease HII (208 aa).

Residues 18–208 (GFYAGVDEVG…RPVKERLEAC (191 aa)) form the RNase H type-2 domain. A divalent metal cation is bound by residues Asp-24, Glu-25, and Asp-116.

Belongs to the RNase HII family. Mn(2+) is required as a cofactor. The cofactor is Mg(2+).

It is found in the cytoplasm. The enzyme catalyses Endonucleolytic cleavage to 5'-phosphomonoester.. Functionally, endonuclease that specifically degrades the RNA of RNA-DNA hybrids. This Shewanella loihica (strain ATCC BAA-1088 / PV-4) protein is Ribonuclease HII.